The chain runs to 394 residues: Ribulose bisphosphate carboxylase large chain (394 aa).

Lysine 5 is subject to N6,N6,N6-trimethyllysine. Substrate contacts are provided by asparagine 114 and threonine 164. The active-site Proton acceptor is lysine 166. Position 168 (lysine 168) interacts with substrate. Residues lysine 192, aspartate 194, and glutamate 195 each contribute to the Mg(2+) site. Lysine 192 is subject to N6-carboxylysine. Histidine 285 serves as the catalytic Proton acceptor. 3 residues coordinate substrate: arginine 286, histidine 318, and serine 370.

Belongs to the RuBisCO large chain family. Type I subfamily. Heterohexadecamer of 8 large chains and 8 small chains. The cofactor is Mg(2+).

It is found in the plastid. The protein localises to the chloroplast. It catalyses the reaction 2 (2R)-3-phosphoglycerate + 2 H(+) = D-ribulose 1,5-bisphosphate + CO2 + H2O. It carries out the reaction D-ribulose 1,5-bisphosphate + O2 = 2-phosphoglycolate + (2R)-3-phosphoglycerate + 2 H(+). RuBisCO catalyzes two reactions: the carboxylation of D-ribulose 1,5-bisphosphate, the primary event in carbon dioxide fixation, as well as the oxidative fragmentation of the pentose substrate in the photorespiration process. Both reactions occur simultaneously and in competition at the same active site. This is Ribulose bisphosphate carboxylase large chain (rbcL) from Euryale ferox (Gorgon plant).